The following is a 905-amino-acid chain: MSIEPDISPSPDTPAPIEAKVSPMMEQYHEIKAANPGLLLFYRMGDFYELFFEDAEIAARALGITLTKRGKHKGQDIPMCGVPVERSDDYLHRLIALGHRVAVCEQTEDPAAARARKSVVRRDVVRLITPGTLTEDTLLDARANNYLLAIARARASAGADRIGLAWIDISTAEFIVTECAPAELAATLARINPNEAIVTDALYSDPELGPLLRELPAVTPLTRDVFDSATAERRLCDYFAVATMDGLSAMSRLEATAAAACVTYIDRTQLGKKPPLSPPSREATGSTMAIDPATRANLELTRTLSGERRGSLLDAIDCTVTAAGSRLLAQRLAAPLTDVEQIAQRLDAVAALLPDPGLREALRATLRAAPDMSRALARLSVGRGGPRDLAALRDGLLAADQALAQLGALEVPPKEIQTAMAALRRPSRDLAQEFSRALADDLPLMKRDGGFVREGYHDALDETRKLRDDSRLIVAAMQARYADDCGVKGLKIRHNNVLGYFVEVTAQHGDKLMAPPLNLTFIHRQTLAGQTRFTTAELGEIEAKIANAGDRALGLELEIFERLVALVQAATDDLRAAAHGFAALDVTLALAKLAVDDNYVRPEVDGSLSFAIEGGRHPVVEQALRRDGQPFIANACDLSPGPGQQSGQIWLITGPNMAGKSTFLRQNALIALLAQIGSFVPASRARIGIVDRLFSRVGAADDLARGRSTFMVEMVETAVILNQASERALVILDEIGRGTATFDGLSIAWAAIEHLHESNRCRSLFATHYHELTALSAKLPRLFNATVRVKEWHGDVVFLHEVLPGSADRSYGIQVAKLAGLPPSVITRAKSVLAKLEAQDRGQSARALAEDLPLFAVTARAAAEPSPPSEAERLIEALKALHPDELSPREALDALYALKAKLGKA.

The interval 272 to 292 (KKPPLSPPSREATGSTMAIDP) is disordered. 654 to 661 (GPNMAGKS) contributes to the ATP binding site.

This sequence belongs to the DNA mismatch repair MutS family.

Its function is as follows. This protein is involved in the repair of mismatches in DNA. It is possible that it carries out the mismatch recognition step. This protein has a weak ATPase activity. This chain is DNA mismatch repair protein MutS, found in Rhodopseudomonas palustris (strain BisB18).